Consider the following 522-residue polypeptide: Cytochrome P450 1A3 (522 aa).

Position 229 (Phe-229) interacts with substrate. Cys-463 is a binding site for heme.

It belongs to the cytochrome P450 family. Heme serves as cofactor. As to expression, liver.

The protein resides in the endoplasmic reticulum membrane. It is found in the microsome membrane. The enzyme catalyses an organic molecule + reduced [NADPH--hemoprotein reductase] + O2 = an alcohol + oxidized [NADPH--hemoprotein reductase] + H2O + H(+). Cytochromes P450 are a group of heme-thiolate monooxygenases. They oxidize a variety of structurally unrelated compounds, including steroids, fatty acids, and xenobiotics. The chain is Cytochrome P450 1A3 (cyp1a3) from Oncorhynchus mykiss (Rainbow trout).